The primary structure comprises 153 residues: 3-hydroxyacyl-[acyl-carrier-protein] dehydratase FabZ (153 aa).

Residue His54 is part of the active site.

This sequence belongs to the thioester dehydratase family. FabZ subfamily.

The protein resides in the cytoplasm. It carries out the reaction a (3R)-hydroxyacyl-[ACP] = a (2E)-enoyl-[ACP] + H2O. Involved in unsaturated fatty acids biosynthesis. Catalyzes the dehydration of short chain beta-hydroxyacyl-ACPs and long chain saturated and unsaturated beta-hydroxyacyl-ACPs. The polypeptide is 3-hydroxyacyl-[acyl-carrier-protein] dehydratase FabZ (Shewanella pealeana (strain ATCC 700345 / ANG-SQ1)).